The sequence spans 414 residues: TAR DNA-binding protein 43 (414 aa).

Residues Lys-79, Lys-84, Lys-95, Lys-102, and Lys-181 each participate in a glycyl lysine isopeptide (Lys-Gly) (interchain with G-Cter in SUMO2) cross-link. The Nuclear localization signal motif lies at Lys-82–Arg-98. RRM domains are found at residues Ser-104–Glu-200 and Arg-191–Pro-262. At Ser-183 the chain carries Phosphoserine. Residues Asp-216–Met-414 are interaction with UBQLN2. A Nuclear export signal motif is present at residues Ile-239 to Ile-250. Basic and acidic residues predominate over residues Glu-261–Gly-274. Disordered stretches follow at residues Glu-261–Gln-303 and Ala-341–Ser-373. Lys-263 participates in a covalent cross-link: Glycyl lysine isopeptide (Lys-Gly) (interchain with G-Cter in SUMO2). A compositionally biased stretch (gly residues) spans Arg-275–Gln-303. Residue Ser-292 is modified to Phosphoserine. At Arg-293 the chain carries Omega-N-methylarginine. A compositionally biased stretch (low complexity) spans Ser-342–Asn-358.

In terms of assembly, homodimer. Homooligomer (via its N-terminal domain). Interacts with BRDT. Binds specifically to pyrimidine-rich motifs of TAR DNA and to single stranded TG repeated sequences. Binds to RNA, specifically to UG repeated sequences with a minimum of six contiguous repeats. Interacts with ATXN2; the interaction is RNA-dependent. Interacts with MATR3. Interacts with UBQLN2. Interacts with HNRNPA2B1. Interacts with ZNF106. Interacts with CNOT7/CAF1. Interacts with CRY2. Interacts with PPIA/CYPA; the interaction is dependent on RNA-binding activity of TARDBP and PPIase activity of PPIA/CYPA and acetylation of PPIA/CYPA at 'Lys-125' favors the interaction. Post-translationally, hyperphosphorylated in hippocampus, neocortex, and spinal cord from individuals affected with ALS and FTLDU. Phosphorylated upon cellular stress. Ubiquitinated in hippocampus, neocortex, and spinal cord from individuals affected with ALS and FTLDU. In terms of processing, cleaved to generate C-terminal fragments in hippocampus, neocortex, and spinal cord from individuals affected with ALS and FTLDU. As to expression, ubiquitously expressed. In particular, expression is high in pancreas, placenta, lung, genital tract and spleen.

It is found in the nucleus. It localises to the cytoplasm. The protein localises to the stress granule. Its subcellular location is the mitochondrion. In terms of biological role, RNA-binding protein that is involved in various steps of RNA biogenesis and processing. Preferentially binds, via its two RNA recognition motifs RRM1 and RRM2, to GU-repeats on RNA molecules predominantly localized within long introns and in the 3'UTR of mRNAs. In turn, regulates the splicing of many non-coding and protein-coding RNAs including proteins involved in neuronal survival, as well as mRNAs that encode proteins relevant for neurodegenerative diseases. Plays a role in maintaining mitochondrial homeostasis by regulating the processing of mitochondrial transcripts. Also regulates mRNA stability by recruiting CNOT7/CAF1 deadenylase on mRNA 3'UTR leading to poly(A) tail deadenylation and thus shortening. In response to oxidative insult, associates with stalled ribosomes localized to stress granules (SGs) and contributes to cell survival. Also participates in the normal skeletal muscle formation and regeneration, forming cytoplasmic myo-granules and binding mRNAs that encode sarcomeric proteins. Plays a role in the maintenance of the circadian clock periodicity via stabilization of the CRY1 and CRY2 proteins in a FBXL3-dependent manner. Negatively regulates the expression of CDK6. Regulates the expression of HDAC6, ATG7 and VCP in a PPIA/CYPA-dependent manner. This chain is TAR DNA-binding protein 43, found in Homo sapiens (Human).